A 360-amino-acid polypeptide reads, in one-letter code: Peptide chain release factor 1 (360 aa).

At Q235 the chain carries N5-methylglutamine. Positions 286–311 are disordered; sequence QAQAQADTRRNLLGSGDRSDKIRTYN.

The protein belongs to the prokaryotic/mitochondrial release factor family. Methylated by PrmC. Methylation increases the termination efficiency of RF1.

The protein resides in the cytoplasm. Its function is as follows. Peptide chain release factor 1 directs the termination of translation in response to the peptide chain termination codons UAG and UAA. This is Peptide chain release factor 1 from Histophilus somni (strain 2336) (Haemophilus somnus).